A 101-amino-acid chain; its full sequence is Small ribosomal subunit protein uS14A (101 aa).

This sequence belongs to the universal ribosomal protein uS14 family. As to quaternary structure, part of the 30S ribosomal subunit. Contacts proteins S3 and S10.

Its function is as follows. Binds 16S rRNA, required for the assembly of 30S particles and may also be responsible for determining the conformation of the 16S rRNA at the A site. This is Small ribosomal subunit protein uS14A from Salinispora arenicola (strain CNS-205).